The following is a 132-amino-acid chain: Small ribosomal subunit protein uS8 (132 aa).

Part of the 30S ribosomal subunit. Contacts proteins S5 and S12. A modified and unmodified form exist; the nature of the modification(s) is unknown.

Functionally, one of the primary rRNA binding proteins, it binds directly to 16S rRNA central domain where it helps coordinate assembly of the platform of the 30S subunit. The chain is Small ribosomal subunit protein uS8 from Rhodopseudomonas palustris (strain ATCC BAA-98 / CGA009).